A 309-amino-acid polypeptide reads, in one-letter code: Probable ABC transporter permease protein YesP (309 aa).

6 consecutive transmembrane segments (helical) span residues 29 to 49 (FIIG…FLSF), 84 to 104 (FTYV…IAVI), 114 to 134 (IYRT…VAIM), 167 to 187 (ALWT…LIFL), 217 to 237 (LPIL…SAFM), and 275 to 295 (YASA…LILF). The ABC transmembrane type-1 domain occupies 80–294 (LKVTFTYVLA…VIVGLITLIL (215 aa)).

This sequence belongs to the binding-protein-dependent transport system permease family. MalFG subfamily.

It localises to the cell membrane. Functionally, part of a binding-protein-dependent transport system. Probably responsible for the translocation of the substrate across the membrane. The sequence is that of Probable ABC transporter permease protein YesP (yesP) from Bacillus subtilis (strain 168).